A 307-amino-acid polypeptide reads, in one-letter code: Methionyl-tRNA formyltransferase (307 aa).

A (6S)-5,6,7,8-tetrahydrofolate-binding site is contributed by 108 to 111; sequence SLLP.

It belongs to the Fmt family.

It catalyses the reaction L-methionyl-tRNA(fMet) + (6R)-10-formyltetrahydrofolate = N-formyl-L-methionyl-tRNA(fMet) + (6S)-5,6,7,8-tetrahydrofolate + H(+). In terms of biological role, attaches a formyl group to the free amino group of methionyl-tRNA(fMet). The formyl group appears to play a dual role in the initiator identity of N-formylmethionyl-tRNA by promoting its recognition by IF2 and preventing the misappropriation of this tRNA by the elongation apparatus. The polypeptide is Methionyl-tRNA formyltransferase (Xylella fastidiosa (strain M23)).